Reading from the N-terminus, the 404-residue chain is Cyclic AMP-responsive element-binding protein 3 (404 aa).

At 1–261 the chain is on the cytoplasmic side; it reads MDPGGQDLLA…VIEIANKTSS (261 aa). 2 short sequence motifs (LXXLL motif) span residues 19 to 23 and 64 to 68; these read LGFLL and LSSLL. An HCFC1-binding-motif (HBM) motif is present at residues 87–90; it reads DHNY. One can recognise a bZIP domain in the interval 185–248; that stretch reads VLKRVRRKIR…LSLLDQLRKL (64 aa). Positions 187-225 are basic motif; it reads KRVRRKIRNKRAAQESRKKKKVYVVGLESRVLKYTAQNR. Positions 227-248 are leucine-zipper; it reads LQNKVQRLEEQNLSLLDQLRKL. A helical; Signal-anchor for type II membrane protein membrane pass occupies residues 262–282; it reads GSTCVLVLVFSFCLLLVPAMY. Residues 283–404 are Lumenal-facing; the sequence is SSDARGSVPA…LVIFQGRYSG (122 aa). The disordered stretch occupies residues 305–327; the sequence is PSEDDHQPKPSALSSELPMDSTH. N-linked (GlcNAc...) asparagine glycosylation is found at asparagine 342 and asparagine 380.

The protein belongs to the bZIP family. ATF subfamily. Homodimer. Interacts with HCFC1; the interaction is required to stimulate CREB3 transcriptional activity. Interacts with CREBZF; the interaction occurs only in combination with HCFC1. Interacts (via central part and transmembrane region) with DCSTAMP (via C-terminus cytoplasmic domain). Interacts with OS9. Interacts (via leucine-zipper domain) with CREBRF (via leucine-zipper domain); the interaction occurs only after CREB3 activation and promotes CREB3 degradation. Interacts (via C-terminal domain) with CCR1. First proteolytically cleaved by site-1 protease (S1P) that generates membrane-associated N-terminus and a luminal C-terminus forms. The membrane-associated N-terminus form is further proteolytically processed probably by the site-2 protease (S2P) through a regulated intramembrane proteolysis (RIP), releasing the transcriptional active processed cyclic AMP-responsive element-binding protein 3 form, which is transported to the nucleus. The proteolytic cleavage is strongly induced during dendritic cell (DC) maturation and inhibited by DCSTAMP. That form is rapidly degraded. Post-translationally, N-glycosylated. In terms of tissue distribution, widely expressed.

Its subcellular location is the endoplasmic reticulum membrane. The protein localises to the golgi apparatus. It localises to the nucleus. It is found in the cytoplasm. Functionally, endoplasmic reticulum (ER)-bound sequence-specific transcription factor that directly binds DNA and activates transcription. Plays a role in the unfolded protein response (UPR), promoting cell survival versus ER stress-induced apoptotic cell death. Also involved in cell proliferation, migration and differentiation, tumor suppression and inflammatory gene expression. Acts as a positive regulator of LKN-1/CCL15-induced chemotaxis signaling of leukocyte cell migration. Associates with chromatin to the HERPUD1 promoter. Also induces transcriptional activation of chemokine receptors. Functions as a negative transcriptional regulator in ligand-induced transcriptional activation of the glucocorticoid receptor NR3C1 by recruiting and activating histone deacetylases (HDAC1, HDAC2 and HDAC6). Also decreases the acetylation level of histone H4. Does not promote the chemotactic activity of leukocyte cells. Its function is as follows. This is the transcriptionally active form that translocates to the nucleus and activates unfolded protein response (UPR) target genes during endoplasmic reticulum (ER) stress response. Binds the cAMP response element (CRE) (consensus: 5'-GTGACGT[AG][AG]-3') and C/EBP sequences present in many promoters to activate transcription of the genes. Binds to the unfolded protein response element (UPRE) consensus sequences sites. Binds DNA to the 5'-CCAC[GA]-3'half of ERSE II (5'-ATTGG-N-CCACG-3'). In Mus musculus (Mouse), this protein is Cyclic AMP-responsive element-binding protein 3 (Creb3).